The chain runs to 467 residues: Abscisic acid 8'-hydroxylase 1 (467 aa).

The chain crosses the membrane as a helical span at residues A5–I24. C411 serves as a coordination point for heme.

Belongs to the cytochrome P450 family. It depends on heme as a cofactor. As to expression, mainly expressed in flowers, siliques, roots and stems. Lower expression in rosette leaves and dry seeds. Expressed in vascular tissues of embryo during the seed development.

The protein resides in the membrane. The enzyme catalyses 2-cis-(+)-abscisate + reduced [NADPH--hemoprotein reductase] + O2 = (+)-8'-hydroxyabscisate + oxidized [NADPH--hemoprotein reductase] + H2O + H(+). The protein operates within plant hormone degradation; abscisic acid degradation. Functionally, involved in the oxidative degradation of abscisic acid. Plays an important role in determining abscisic acid levels in dry seeds and in the control of postgermination growth. The protein is Abscisic acid 8'-hydroxylase 1 (CYP707A1) of Arabidopsis thaliana (Mouse-ear cress).